The primary structure comprises 221 residues: Iron-sulfur cluster repair protein YtfE (221 aa).

Belongs to the RIC family. YtfE subfamily. In terms of assembly, homodimer.

Its subcellular location is the cytoplasm. Its function is as follows. Di-iron-containing protein involved in the repair of iron-sulfur clusters damaged by oxidative and nitrosative stress conditions. This is Iron-sulfur cluster repair protein YtfE from Cronobacter sakazakii (strain ATCC BAA-894) (Enterobacter sakazakii).